The chain runs to 250 residues: uncharacterized protein (250 aa).

A disordered region spans residues 182 to 205 (HTPIVSIQTPPPPAPTPNRPDVPA). A compositionally biased stretch (pro residues) spans 190 to 201 (TPPPPAPTPNRP). Residues 230–250 (TRISVIPLLSVLLLVIIIILL) form a helical membrane-spanning segment.

This sequence belongs to the ascovirus HvAV ORF18 family.

It is found in the membrane. This is an uncharacterized protein from Spodoptera frugiperda ascovirus 1a (SfAV-1a).